A 749-amino-acid polypeptide reads, in one-letter code: Small G protein signaling modulator 3 (749 aa).

Residues 114 to 305 (GIPHGMRPQL…RIWDLFFYEG (192 aa)) enclose the Rab-GAP TBC domain. A Phosphoserine modification is found at Ser406. Residues 415 to 439 (EDDLEALKAKNIKQTELVADLREAI) adopt a coiled-coil conformation. The region spanning 480–539 (SHRRRAKALLDFERHDDDELGFRKNDIITIVSQKDEHCWVGELNGLRGWFPAKFVEVLDE) is the SH3 domain. Residues 555–718 (GVTDLVRGTL…FAFSLSQDWE (164 aa)) enclose the RUN domain.

It belongs to the small G protein signaling modulator family. Interacts with GJA1. Interaction with GJA1 induces its degradation. Interacts via its RUN domain with the C-terminal region of NF2. Interacts with RAB3A, RAB4A, RAB5A, RAB8A, RAB11A, RAP1A, RAP1B, RAP2A, RAP2B and PDCD6IP. No interaction with RAB27A. Widely expressed.

It localises to the cytoplasm. May play a cooperative role in NF2-mediated growth suppression of cells. The polypeptide is Small G protein signaling modulator 3 (Homo sapiens (Human)).